We begin with the raw amino-acid sequence, 918 residues long: Pre-pro-metalloprotease PrtV (918 aa).

The signal sequence occupies residues 1 to 23 (MKTIKKTLLAAAIASFFSSGLYA). The propeptide occupies 24–105 (QTPIDLGVVN…QKGPHKARVF (82 aa)). Residue histidine 330 coordinates Zn(2+). Glutamate 331 is an active-site residue. Histidine 334 is a binding site for Zn(2+). Residues isoleucine 757, aspartate 782, aspartate 821, and aspartate 825 each contribute to the Ca(2+) site. 2 consecutive PKD domains span residues 758–835 (APVA…TIKV) and 855–918 (VTMW…KVKL). A propeptide spanning residues 835–918 (VDTPNALPQA…VTTITIKVKL (84 aa)) is cleaved from the precursor.

Belongs to the peptidase M6 family. The cofactor is Zn(2+). PrtV is expressed as an inactive, multidomain, 102 kDa pre-pro-metalloprotease. To form a catalytically active protease, PrtV is first secreted, and then it undergoes N- and C-terminal cleavages during envelope translocation to yield a 81 kDa pro-metalloprotease. Outside the cell, the 81 kDa pro-metalloprotease undergoes an auto-cleavage. The two major products of autoproteolysis (37 kDa and 18 kDa) together form the so called 55 kDa active complex.

It localises to the secreted. With respect to regulation, calcium plays an important structural role, providing stability to this protein in the cytoplasm. Outside the cell, the decrease of the calcium concentration triggers the autoproteolysis. PrtV activity is increased by 25 mM of Sr(2+) or Mg(2+) and to some extent by Ba(2+); however, Ba(2+) inhibits PrtV at higher concentrations. Completely inhibited by EDTA and 1,10-phenanthroline. Its function is as follows. Metalloprotease that exhibits a cytotoxic effect leading to cell death. In host tissues, it could play a role in pathogenesis by modulating the stability of the extracellular matrix components such as fibronectin and fibrinogen. Also able to cleave plasminogen. The chain is Pre-pro-metalloprotease PrtV from Vibrio cholerae serotype O1 (strain ATCC 39315 / El Tor Inaba N16961).